The primary structure comprises 316 residues: Taste receptor type 2 member 3 (316 aa).

The Extracellular segment spans residues 1-6 (MMGLTE). The helical transmembrane segment at 7–27 (GVFLILSGTQFTLGILVNCFI) threads the bilayer. Residues 28–42 (ELVNGSSWFKTKRMS) are Cytoplasmic-facing. A helical membrane pass occupies residues 43-63 (LSDFIITTLALLRIILLCIIL). Over 64–94 (TDSFLIEFSPNTHDSGIIMQIIDVSWTFTNH) the chain is Extracellular. A helical transmembrane segment spans residues 95 to 115 (LSIWLATCLGVLYCLKIASFS). The Cytoplasmic portion of the chain corresponds to 116–128 (HPTFLWLKWRVSR). A helical transmembrane segment spans residues 129 to 149 (VMVWMLLGALLLSCGSTASLI). Residues 150–186 (NEFKLYSVFRGIEATRNVTEHFRKKRSEYYLIHVLGT) are Extracellular-facing. Residue asparagine 166 is glycosylated (N-linked (GlcNAc...) asparagine). The helical transmembrane segment at 187-207 (LWYLPPLIVSLASYSLLIFSL) threads the bilayer. The Cytoplasmic portion of the chain corresponds to 208-234 (GRHTRQMLQNGTSSRDPTTEAHKRAIR). A helical membrane pass occupies residues 235 to 255 (IILSFFFLFLLYFLAFLIASF). Residues 256-266 (GNFLPKTKMAK) lie on the Extracellular side of the membrane. A helical transmembrane segment spans residues 267-287 (MIGEVMTMFYPAGHSFILILG). Topologically, residues 288-316 (NSKLKQTFVVMLRCESGHLKPGSKGPIFS) are cytoplasmic.

This sequence belongs to the G-protein coupled receptor T2R family. In terms of tissue distribution, expressed in subsets of taste receptor cells of the tongue and palate epithelium and exclusively in gustducin-positive cells. Expressed in the antrum and fundus (part of the stomach), duodenum and in gastric endocrine cells.

It is found in the membrane. Functionally, gustducin-coupled receptor implicated in the perception of bitter compounds in the oral cavity and the gastrointestinal tract. Signals through PLCB2 and the calcium-regulated cation channel TRPM5. This chain is Taste receptor type 2 member 3 (TAS2R3), found in Homo sapiens (Human).